A 378-amino-acid chain; its full sequence is UDP-4-amino-4-deoxy-L-arabinose--oxoglutarate aminotransferase (378 aa).

An N6-(pyridoxal phosphate)lysine modification is found at K182.

Belongs to the DegT/DnrJ/EryC1 family. ArnB subfamily. As to quaternary structure, homodimer. Pyridoxal 5'-phosphate is required as a cofactor.

It catalyses the reaction UDP-4-amino-4-deoxy-beta-L-arabinose + 2-oxoglutarate = UDP-beta-L-threo-pentopyranos-4-ulose + L-glutamate. The protein operates within nucleotide-sugar biosynthesis; UDP-4-deoxy-4-formamido-beta-L-arabinose biosynthesis; UDP-4-deoxy-4-formamido-beta-L-arabinose from UDP-alpha-D-glucuronate: step 2/3. Its pathway is bacterial outer membrane biogenesis; lipopolysaccharide biosynthesis. In terms of biological role, catalyzes the conversion of UDP-4-keto-arabinose (UDP-Ara4O) to UDP-4-amino-4-deoxy-L-arabinose (UDP-L-Ara4N). The modified arabinose is attached to lipid A and is required for resistance to polymyxin and cationic antimicrobial peptides. This Aeromonas hydrophila subsp. hydrophila (strain ATCC 7966 / DSM 30187 / BCRC 13018 / CCUG 14551 / JCM 1027 / KCTC 2358 / NCIMB 9240 / NCTC 8049) protein is UDP-4-amino-4-deoxy-L-arabinose--oxoglutarate aminotransferase.